The sequence spans 459 residues: Bifunctional protein GlmU (459 aa).

The pyrophosphorylase stretch occupies residues 1–229; the sequence is MSNFAIILAA…FDESLGVNDR (229 aa). Residues 8–11, K22, Q72, and 77–78 contribute to the UDP-N-acetyl-alpha-D-glucosamine site; these read LAAG and GT. Residue D102 coordinates Mg(2+). Residues G139, E154, N169, and N227 each contribute to the UDP-N-acetyl-alpha-D-glucosamine site. Mg(2+) is bound at residue N227. The linker stretch occupies residues 230-250; it reads VALATAESVMRRRINHKHMVN. The interval 251 to 459 is N-acetyltransferase; the sequence is GVSFVNPEAT…TRLPHHPKNQ (209 aa). Residues R332 and K350 each contribute to the UDP-N-acetyl-alpha-D-glucosamine site. The active-site Proton acceptor is the H362. UDP-N-acetyl-alpha-D-glucosamine is bound by residues Y365 and N376. Acetyl-CoA contacts are provided by residues A379, 385-386, S404, A422, and R439; that span reads NY.

In the N-terminal section; belongs to the N-acetylglucosamine-1-phosphate uridyltransferase family. The protein in the C-terminal section; belongs to the transferase hexapeptide repeat family. Homotrimer. Requires Mg(2+) as cofactor.

The protein localises to the cytoplasm. The enzyme catalyses alpha-D-glucosamine 1-phosphate + acetyl-CoA = N-acetyl-alpha-D-glucosamine 1-phosphate + CoA + H(+). It catalyses the reaction N-acetyl-alpha-D-glucosamine 1-phosphate + UTP + H(+) = UDP-N-acetyl-alpha-D-glucosamine + diphosphate. It participates in nucleotide-sugar biosynthesis; UDP-N-acetyl-alpha-D-glucosamine biosynthesis; N-acetyl-alpha-D-glucosamine 1-phosphate from alpha-D-glucosamine 6-phosphate (route II): step 2/2. The protein operates within nucleotide-sugar biosynthesis; UDP-N-acetyl-alpha-D-glucosamine biosynthesis; UDP-N-acetyl-alpha-D-glucosamine from N-acetyl-alpha-D-glucosamine 1-phosphate: step 1/1. It functions in the pathway bacterial outer membrane biogenesis; LPS lipid A biosynthesis. Its function is as follows. Catalyzes the last two sequential reactions in the de novo biosynthetic pathway for UDP-N-acetylglucosamine (UDP-GlcNAc). The C-terminal domain catalyzes the transfer of acetyl group from acetyl coenzyme A to glucosamine-1-phosphate (GlcN-1-P) to produce N-acetylglucosamine-1-phosphate (GlcNAc-1-P), which is converted into UDP-GlcNAc by the transfer of uridine 5-monophosphate (from uridine 5-triphosphate), a reaction catalyzed by the N-terminal domain. This Streptococcus pneumoniae (strain Hungary19A-6) protein is Bifunctional protein GlmU.